Consider the following 699-residue polypeptide: D-(-)-3-hydroxybutyrate oligomer hydrolase (699 aa).

Positions 1-33 are cleaved as a signal peptide; it reads MTAIRGGSRRAPGLALALLGGVLLGACHGDENA. The active-site Charge relay system is Ser-311.

This sequence belongs to the D-(-)-3-hydroxybutyrate oligomer hydrolase family.

It is found in the secreted. The catalysed reaction is (3R)-hydroxybutanoate dimer + H2O = 2 (R)-3-hydroxybutanoate + H(+). It participates in lipid metabolism; butanoate metabolism. Functionally, participates in the degradation of poly-3-hydroxybutyrate (PHB). It works downstream of poly(3-hydroxybutyrate) depolymerase, hydrolyzing D(-)-3-hydroxybutyrate oligomers of various length (3HB-oligomers) into 3HB-monomers. This is D-(-)-3-hydroxybutyrate oligomer hydrolase from Burkholderia mallei (strain ATCC 23344).